Consider the following 547-residue polypeptide: Collagen EMF1-alpha (547 aa).

Disordered regions lie at residues 1–99 (GVPG…APGV) and 116–311 (GPDG…GGGI). Residues 1–280 (GVPGPNGDVG…QGPRGGQGPK (280 aa)) are triple-helical region. 2 stretches are compositionally biased toward low complexity: residues 27–69 (QGPD…IRGQ) and 160–175 (QGSK…VGPQ). Lysine 187 carries the post-translational modification Allysine. Residues 219-228 (VKGEKGEVGD) show a composition bias toward basic and acidic residues. The segment covering 246-271 (DAGPAGPIGDAGIQGPPGQDGPTGAQ) has biased composition (low complexity). Residues 272 to 281 (GPRGGQGPKG) show a composition bias toward gly residues. A telopeptide region spans residues 308–336 (GGGIILVPVNDQNPTRSPVSGSVFYRGQA). Positions 337–547 (EETDVNLGSV…GFEMGPACFY (211 aa)) are cleaved as a propeptide — C-terminal propeptide. In terms of domain architecture, Fibrillar collagen NC1 spans 343–547 (LGSVADVIEL…GFEMGPACFY (205 aa)). Asparagine 381 and asparagine 406 each carry an N-linked (GlcNAc...) asparagine glycan.

This sequence belongs to the fibrillar collagen family.

Its subcellular location is the secreted. It is found in the extracellular space. The protein resides in the extracellular matrix. This is Collagen EMF1-alpha (COLF1) from Ephydatia muelleri (Mueller's freshwater sponge).